Reading from the N-terminus, the 364-residue chain is MSSIFGKIFRVSTFGESHGGAVGVILDGCPPKLKINIDLIQNELDRRRPGQSKITTPRKEDDKLEILSGLKEGITLGTPIAMLVRNKDQRPEDYNNLEQVFRPSHADGTYHLKYGIQAGSGGGRASARETIGRVAAGAIAKQLLKTLFNTEILSWVKRIHDIDSQVNKNKLTLSKIDSNIVRCPDEKVATKMIQRIKELQQEGDSCGGVIECLVKNVPSGLGMPVFDKLEADLAKALMSLPATKGFEIGSGFLGTYLRGSEHNDSFVESDDINKLKTKSNNSGGIQGGISNGENIEMKIAFKPTATIGKEQKTVNSDGKEIVMKAKGRHDPCVLPRAVPMVDSMVALVLADHLLLHQAQCSIIK.

An NADP(+)-binding site is contributed by R47. FMN-binding positions include 124-126 (RAS), G287, 302-306 (KPTAT), and R328.

Belongs to the chorismate synthase family. As to quaternary structure, homotetramer. Requires FMNH2 as cofactor.

The catalysed reaction is 5-O-(1-carboxyvinyl)-3-phosphoshikimate = chorismate + phosphate. It functions in the pathway metabolic intermediate biosynthesis; chorismate biosynthesis; chorismate from D-erythrose 4-phosphate and phosphoenolpyruvate: step 7/7. Functionally, catalyzes the anti-1,4-elimination of the C-3 phosphate and the C-6 proR hydrogen from 5-enolpyruvylshikimate-3-phosphate (EPSP) to yield chorismate, which is the branch point compound that serves as the starting substrate for the three terminal pathways of aromatic amino acid biosynthesis. This reaction introduces a second double bond into the aromatic ring system. The chain is Chorismate synthase from Prochlorococcus marinus (strain MIT 9515).